The chain runs to 135 residues: ATP synthase epsilon chain, chloroplastic (135 aa).

The protein belongs to the ATPase epsilon chain family. F-type ATPases have 2 components, CF(1) - the catalytic core - and CF(0) - the membrane proton channel. CF(1) has five subunits: alpha(3), beta(3), gamma(1), delta(1), epsilon(1). CF(0) has three main subunits: a, b and c.

The protein resides in the plastid. Its subcellular location is the chloroplast thylakoid membrane. In terms of biological role, produces ATP from ADP in the presence of a proton gradient across the membrane. This Marchantia polymorpha (Common liverwort) protein is ATP synthase epsilon chain, chloroplastic.